Reading from the N-terminus, the 185-residue chain is Ribosome-recycling factor (185 aa).

This sequence belongs to the RRF family.

The protein resides in the cytoplasm. In terms of biological role, responsible for the release of ribosomes from messenger RNA at the termination of protein biosynthesis. May increase the efficiency of translation by recycling ribosomes from one round of translation to another. This chain is Ribosome-recycling factor, found in Myxococcus xanthus (strain DK1622).